A 238-amino-acid polypeptide reads, in one-letter code: Cysteine-rich venom protein (238 aa).

Residues 1-19 (MIAFIVLLSLAAVLQQSSG) form the signal peptide. The SCP domain occupies 38-164 (VDKHNALRRS…STKYLYVCQY (127 aa)). 8 disulfide bridges follow: Cys75/Cys153, Cys92/Cys165, Cys148/Cys162, Cys184/Cys191, Cys187/Cys196, Cys200/Cys233, Cys209/Cys227, and Cys218/Cys231. Residues 200 to 233 (CKYEDAFTNCNELAKETKCKTEWIKSKCPATCFC) enclose the ShKT domain.

Belongs to the CRISP family. As to expression, expressed by the venom gland.

The protein resides in the secreted. Blocks olfactory (CNGA2) and retinal (CNGA1) CNG channel currents. Does not affect neither depolarization- nor caffeine-induced contraction of smooth muscle. The protein is Cysteine-rich venom protein of Drysdalia coronoides (White-lipped snake).